A 545-amino-acid polypeptide reads, in one-letter code: MTILTQSTTWQALAAHSHQIPHMRELFAGDPARFSNMSLSTCGLFLDYSKNRATPETLNLLQTLAQEAKLDAKIKAMFAGDIINTTEKRAVLHTALRSTAEQSIVAEGQDIVPEVQQTLNKMQQFVTSVTSGQWKGFTGKAITDIVSIGIGGSFLGPKIVSQALRPYWITGLNCHFVANVDGTSISEKLKLLDPETTLFIMSSKSFGTQETLTNTLTAKAWFLAKGGSQSDVAKHFVAVTSNVAKATDFGIDADNIFPMWDWVGGRYSLWSAIGLPIALLIGMDNFRSLLKGAHQMDTHFANAPLAENMPVIMGLFSLWYGNFFNAQSHVVLTYDHYLRGLPAYFQQLDMESNGKSVTLNGTHVDYSTGPVIWGGEGTNGQHAYHQLLHQGNALIPADFIMPLQSHNPIGEHHDQLASNCFGQTQALMQGRTLDEALAELSKSSLSDEEKLLIAKHKVMPGNKPSNTLLMDKLTPETLGALIALYEHRTFVQGAIWDINSFDQWGVELGKSLGNDVLARIGAEQDATALDASSNGLINLYRQGKI.

Residue Glu351 is the Proton donor of the active site. Catalysis depends on residues His382 and Lys510.

Belongs to the GPI family.

It is found in the cytoplasm. The catalysed reaction is alpha-D-glucose 6-phosphate = beta-D-fructose 6-phosphate. It functions in the pathway carbohydrate biosynthesis; gluconeogenesis. Its pathway is carbohydrate degradation; glycolysis; D-glyceraldehyde 3-phosphate and glycerone phosphate from D-glucose: step 2/4. Its function is as follows. Catalyzes the reversible isomerization of glucose-6-phosphate to fructose-6-phosphate. The chain is Glucose-6-phosphate isomerase from Shewanella sp. (strain MR-7).